A 178-amino-acid chain; its full sequence is ATP-dependent protease subunit HslV (178 aa).

Residue Thr7 is part of the active site. Gly162, Cys165, and Thr168 together coordinate Na(+).

This sequence belongs to the peptidase T1B family. HslV subfamily. A double ring-shaped homohexamer of HslV is capped on each side by a ring-shaped HslU homohexamer. The assembly of the HslU/HslV complex is dependent on binding of ATP.

The protein resides in the cytoplasm. The enzyme catalyses ATP-dependent cleavage of peptide bonds with broad specificity.. Its activity is regulated as follows. Allosterically activated by HslU binding. Protease subunit of a proteasome-like degradation complex believed to be a general protein degrading machinery. The sequence is that of ATP-dependent protease subunit HslV from Burkholderia orbicola (strain AU 1054).